The sequence spans 401 residues: Steroid C26-monooxygenase (401 aa).

A heme-binding site is contributed by Cys-343.

Belongs to the cytochrome P450 family. Requires heme as cofactor.

The enzyme catalyses cholest-4-en-3-one + 6 reduced [2Fe-2S]-[ferredoxin] + 3 O2 + 5 H(+) = (25R)-3-oxocholest-4-en-26-oate + 6 oxidized [2Fe-2S]-[ferredoxin] + 4 H2O. It participates in steroid metabolism; cholesterol degradation. Functionally, involved in the utilization of cholesterol as the sole carbon and energy source by degrading the side chain. Primarily catalyzes the sequential oxidation of the terminal methyl of cholest-4-en-3-one into (25R)-26-hydroxycholest-4-en-3-one (alcohol), (25R)-26-oxocholest-4-en-3-one (aldehyde), to finally yield the carboxylic acid (25R)-3-oxocholest-4-en-26-oate. Also able to sequentially oxidize cholesterol itself, not only cholest-4-en-3-one. The sequence is that of Steroid C26-monooxygenase from Mycolicibacterium smegmatis (strain ATCC 700084 / mc(2)155) (Mycobacterium smegmatis).